A 143-amino-acid chain; its full sequence is MNSIQLIIDIILILWLLILTVLYLRKKSLNLNIVKNKKIVRAKRYIVFYVIAESKVKGDDLERVVRNSLKDLLGNVWLNIANPKVVTYREDTQEGIISTNRIGYKAVLASLPFAKEINGNKILIVPRRTTGSLKKAKKLIGLK.

This sequence belongs to the eukaryotic/archaeal RNase P protein component 2 family. In terms of assembly, consists of a catalytic RNA component and at least 4-5 protein subunits.

It is found in the cytoplasm. The enzyme catalyses Endonucleolytic cleavage of RNA, removing 5'-extranucleotides from tRNA precursor.. Functionally, part of ribonuclease P, a protein complex that generates mature tRNA molecules by cleaving their 5'-ends. The chain is Ribonuclease P protein component 2 from Saccharolobus islandicus (strain Y.N.15.51 / Yellowstone #2) (Sulfolobus islandicus).